The chain runs to 94 residues: Large ribosomal subunit protein eL33 (94 aa).

It belongs to the eukaryotic ribosomal protein eL33 family.

The chain is Large ribosomal subunit protein eL33 from Aeropyrum pernix (strain ATCC 700893 / DSM 11879 / JCM 9820 / NBRC 100138 / K1).